The primary structure comprises 99 residues: MIPDPRDIILAPVISEKSYGLLEENQYTFLVRPGSNKTEIKIAVEKIFGVKVTNVNTINRQGKRKRTRTGYGKRKDTKRAIVTLSPESKPIEIFGGPAA.

This sequence belongs to the universal ribosomal protein uL23 family. As to quaternary structure, part of the 50S ribosomal subunit. Contacts protein L29, and trigger factor when it is bound to the ribosome.

Its function is as follows. One of the early assembly proteins it binds 23S rRNA. One of the proteins that surrounds the polypeptide exit tunnel on the outside of the ribosome. Forms the main docking site for trigger factor binding to the ribosome. This is Large ribosomal subunit protein uL23 from Saccharopolyspora erythraea (strain ATCC 11635 / DSM 40517 / JCM 4748 / NBRC 13426 / NCIMB 8594 / NRRL 2338).